Reading from the N-terminus, the 443-residue chain is POU domain, class 3, transcription factor 3-B (443 aa).

Disordered regions lie at residues 21–40, 100–150, and 182–244; these read IVHS…VTSV, SPWS…AGAW, and NGML…PTSD. The segment covering 101–121 has biased composition (polar residues); that stretch reads PWSSSPVGMTGSPQQQDVKNN. Basic residues predominate over residues 210–225; the sequence is SHHHHHHHQHQHHQQA. The POU-specific domain maps to 238–312; the sequence is EDTPTSDDLE…LLNKWLEEAD (75 aa). The residue at position 317 (Ser317) is a Phosphoserine. A DNA-binding region (homeobox) is located at residues 330-389; sequence KRKKRTSIEVSVKGALESHFLKCPKPSAQEITSLADNLQLEKEVVRVWFCNRRQKEKRMT.

This sequence belongs to the POU transcription factor family. Class-3 subfamily. As to expression, predominantly expressed in the central nervous system.

It is found in the nucleus. Its function is as follows. Transcription factor that may play important roles in patterning the embryonic brain. The chain is POU domain, class 3, transcription factor 3-B (pou3f3b) from Danio rerio (Zebrafish).